Reading from the N-terminus, the 338-residue chain is MSTLRLLISDSYDPWFNLAVEECIFRQMPATQRVLFLWRNADTVVIGRAQNPWKECNTRRMEEDNVRLARRSSGGGAVFHDLGNTCFTFMAGKPEYDKTISTSIVLNALNALGVSAEASGRNDLVVKTAEGDRKVSGSAYRETKDRGFHHGTLLLNADLSRLANYLNPDKKKLAAKGITSVRSRVTNLTELLPGITHEQVCEAITEAFFAHYGEHVEAEIISPDKTPDLPNFAETFARQSSWEWNFGQAPAFSHLLDERFTWGGVELHFDVEKGHITRAQVFTDSLNPAPLEALAGRLQGCLYRADMLQQECEALLVDFPEQEKELRELSAWIAGAVR.

Residues Pro29–Val216 enclose the BPL/LPL catalytic domain. Residues Arg71, Gly76–Phe79, and Lys134 each bind ATP. Lys134 contributes to the (R)-lipoate binding site.

The protein belongs to the LplA family. As to quaternary structure, monomer.

The protein localises to the cytoplasm. It catalyses the reaction L-lysyl-[lipoyl-carrier protein] + (R)-lipoate + ATP = N(6)-[(R)-lipoyl]-L-lysyl-[lipoyl-carrier protein] + AMP + diphosphate + H(+). It functions in the pathway protein modification; protein lipoylation via exogenous pathway; protein N(6)-(lipoyl)lysine from lipoate: step 1/2. Its pathway is protein modification; protein lipoylation via exogenous pathway; protein N(6)-(lipoyl)lysine from lipoate: step 2/2. Catalyzes both the ATP-dependent activation of exogenously supplied lipoate to lipoyl-AMP and the transfer of the activated lipoyl onto the lipoyl domains of lipoate-dependent enzymes. This Escherichia coli O17:K52:H18 (strain UMN026 / ExPEC) protein is Lipoate-protein ligase A.